The chain runs to 387 residues: 3-ketoacyl-CoA thiolase (387 aa).

C91 functions as the Acyl-thioester intermediate in the catalytic mechanism. Active-site proton acceptor residues include H343 and C373.

This sequence belongs to the thiolase-like superfamily. Thiolase family. As to quaternary structure, heterotetramer of two alpha chains (FadB) and two beta chains (FadA).

It is found in the cytoplasm. The catalysed reaction is an acyl-CoA + acetyl-CoA = a 3-oxoacyl-CoA + CoA. It functions in the pathway lipid metabolism; fatty acid beta-oxidation. Catalyzes the final step of fatty acid oxidation in which acetyl-CoA is released and the CoA ester of a fatty acid two carbons shorter is formed. The protein is 3-ketoacyl-CoA thiolase of Shewanella oneidensis (strain ATCC 700550 / JCM 31522 / CIP 106686 / LMG 19005 / NCIMB 14063 / MR-1).